The following is a 124-amino-acid chain: MQIEIKDGRSDNSPLPERKLVTLIQESYDSLKDDNEINLSTESTSNLLIKLVLEKLEKHSSLYKYIASVTTLNIEGLNEENANFSLKNDIGASWESKKDGIFNYKLEDKNSNECYLITILWLHK.

It belongs to the TDA2 family.

The protein localises to the cytoplasm. The protein resides in the cell projection. In Saccharomyces cerevisiae (strain AWRI796) (Baker's yeast), this protein is Topoisomerase I damage affected protein 2 (TDA2).